Here is a 50-residue protein sequence, read N- to C-terminus: uncharacterized protein (50 aa).

A disordered region spans residues 28–50 (SKLSPVTNGGKTIGKSNKVSKND). A compositionally biased stretch (polar residues) spans 29 to 50 (KLSPVTNGGKTIGKSNKVSKND).

This is an uncharacterized protein from Haemophilus influenzae (strain ATCC 51907 / DSM 11121 / KW20 / Rd).